The sequence spans 419 residues: Lipoyl synthase, mitochondrial (419 aa).

The N-terminal 26 residues, 1–26, are a transit peptide targeting the mitochondrion; that stretch reads MAVCAGRLKCFGNPAVSLRTAASRAY. Low complexity predominate over residues 28–47; sequence TTTSPDPAIPSSSSASSSSA. Positions 28–61 are disordered; sequence TTTSPDPAIPSSSSASSSSALPKRPQTSFRDKLN. Residues cysteine 136, cysteine 141, cysteine 147, cysteine 167, cysteine 171, cysteine 174, and serine 382 each contribute to the [4Fe-4S] cluster site. The Radical SAM core domain occupies 150-371; the sequence is GSSKSAATAT…KDRALEMGFL (222 aa). A disordered region spans residues 399-419; the sequence is AESTGPESTNVPNVTPDAIVR.

The protein belongs to the radical SAM superfamily. Lipoyl synthase family. It depends on [4Fe-4S] cluster as a cofactor.

It is found in the mitochondrion. It carries out the reaction [[Fe-S] cluster scaffold protein carrying a second [4Fe-4S](2+) cluster] + N(6)-octanoyl-L-lysyl-[protein] + 2 oxidized [2Fe-2S]-[ferredoxin] + 2 S-adenosyl-L-methionine + 4 H(+) = [[Fe-S] cluster scaffold protein] + N(6)-[(R)-dihydrolipoyl]-L-lysyl-[protein] + 4 Fe(3+) + 2 hydrogen sulfide + 2 5'-deoxyadenosine + 2 L-methionine + 2 reduced [2Fe-2S]-[ferredoxin]. The protein operates within protein modification; protein lipoylation via endogenous pathway; protein N(6)-(lipoyl)lysine from octanoyl-[acyl-carrier-protein]: step 2/2. Functionally, catalyzes the radical-mediated insertion of two sulfur atoms into the C-6 and C-8 positions of the octanoyl moiety bound to the lipoyl domains of lipoate-dependent enzymes, thereby converting the octanoylated domains into lipoylated derivatives. The chain is Lipoyl synthase, mitochondrial from Coccidioides posadasii (strain C735) (Valley fever fungus).